The primary structure comprises 146 residues: Leghemoglobin Lb120-29 (146 aa).

Residues glycine 2–serine 146 enclose the Globin domain. Tyrosine 24 and tyrosine 29 each carry nitrated tyrosine. Serine 44 contacts heme b. Position 44 is a phosphoserine (serine 44). Histidine 61 provides a ligand contact to O2. Lysine 64, histidine 93, and lysine 96 together coordinate heme b. Tyrosine 134 bears the Nitrated tyrosine mark.

This sequence belongs to the plant globin family. As to quaternary structure, monomer. Nitrated in effective nodules and particularly in hypoxic conditions; this mechanism may play a protective role in the symbiosis by buffering toxic peroxynitrite NO(2)(-). Nitration level decrease during nodule senescence. In terms of processing, phosphorylation at Ser-44 disrupts the molecular environment of its porphyrin ring oxygen binding pocket, thus leading to a reduced oxygen consumption and to the delivery of oxygen O(2) to symbiosomes. As to expression, root nodules.

The protein localises to the cytoplasm. It is found in the cytosol. It localises to the nucleus. Its function is as follows. Leghemoglobin that reversibly binds oxygen O(2) through a pentacoordinated heme iron. In root nodules, facilitates the diffusion of oxygen to the bacteroids while preventing the bacterial nitrogenase from being inactivated by buffering dioxygen, nitric oxide and carbon monoxide, and promoting the formation of reactive oxygen species (ROS, e.g. H(2)O(2)). This role is essential for symbiotic nitrogen fixation (SNF). The sequence is that of Leghemoglobin Lb120-29 from Pisum sativum (Garden pea).